The primary structure comprises 735 residues: MDDLTLLDLLECPVCFEKLDVTAKVLPCQHTFCKPCLQRIFKAHKELRCPECRTLVFCSIEALPANLLLVRLLDGVRSGHNSWRGGSFRRPRILTLQDNRKAKSSPRSLQASPFRLGPTVRIHMDGVPRAKALCNYRGKNPGDLKFNKGDVILLQRQLDENWYQGEINGVSGFFPASSVEVIKQLPQPPPLCRALYNFDLRDKDKSENQDCLTFLKDDVITVISRVDENWAEGKLGDKVGIFPILFVEPNLSARHLLEKSKGHQLSRTKHLSLMSSPSRGKATNTSTLRKSPGSRRKGSGQFAMTTALNTLNRMVHSPEGHQMVEISTPVLISSTSPSMLTQHGDRADFPASSAGQVSTSHPAPASPGHSTAMVSVPSSQQHLSTNMFVALHTYSAQGPEELDLKKGEGIRVLGKNQDGWLRGVSLVTGRTGIFPSDYVIPVFSSTARKTSSFPDSRHPTVCTTWALSTSSVSSQGSFSEGDPRQSGPFRSVFVPTAVNPPRSTSGPGTSGQGSLRKVRSSMRKNGSLQRPVQSGIPTFMVGSLRCSPAMVIRPQKFQFYQPQGMTPSPTPIMVEIGSKSISTGEPALTCINRGGKTRTHSAGNSIIMEGKETPIKSEPPPKPPASAPPSILVKPENSKNGIEKQVKTVRFQNYSPPPTKHSASGPTSGKHEQPATLKGSQPEAVSSEGEMTILFAHRSGCHSGQQTDLRRKSAFSKTTPPVSTASVSQTLFPSK.

An RING-type zinc finger spans residues 12 to 53 (CPVCFEKLDVTAKVLPCQHTFCKPCLQRIFKAHKELRCPECR). 2 SH3 domains span residues 125 to 184 (DGVP…VIKQ) and 187 to 252 (QPPP…PNLS). 2 disordered regions span residues 260–301 (SKGH…GSGQ) and 335–373 (TSPSMLTQHGDRADFPASSAGQVSTSHPAPASPGHSTAM). The segment covering 273–289 (LMSSPSRGKATNTSTLR) has biased composition (polar residues). Residues 373 to 466 (MVSVPSSQQH…RHPTVCTTWA (94 aa)) are interaction with PAK4. The region spanning 383-444 (LSTNMFVALH…PSDYVIPVFS (62 aa)) is the SH3 3 domain. Disordered regions lie at residues 472–534 (VSSQ…PVQS), 612–637 (ETPIKSEPPPKPPASAPPSILVKPEN), and 649–735 (VRFQ…FPSK). Polar residues predominate over residues 523-534 (RKNGSLQRPVQS). Pro residues predominate over residues 617–627 (SEPPPKPPASA). Positions 647–652 (KTVRFQ) are interaction with PPP1CA. Residue Ser-655 is modified to Phosphoserine. Residues 715–735 (FSKTTPPVSTASVSQTLFPSK) show a composition bias toward polar residues.

Belongs to the SH3RF family. In terms of assembly, interacts with FASLG and PPP1CA. Interacts with PAK4 and TNFRSF1A. Interacts with DLK1, MAP3K10, MAPK8IP1/JIP1, MAPK8IP2/JIP2 and MAPK8IP3/JIP3. Interacts with RAC1 (both active GTP- or inactive GDP-bound forms). Post-translationally, autoubiquitinated.

Its subcellular location is the nucleus. It carries out the reaction S-ubiquitinyl-[E2 ubiquitin-conjugating enzyme]-L-cysteine + [acceptor protein]-L-lysine = [E2 ubiquitin-conjugating enzyme]-L-cysteine + N(6)-ubiquitinyl-[acceptor protein]-L-lysine.. It functions in the pathway protein modification; protein ubiquitination. Functionally, has E3 ubiquitin-protein ligase activity. Acts as an anti-apoptotic regulator of the JNK pathway by ubiquitinating and promoting the degradation of SH3RF1, a scaffold protein that is required for pro-apoptotic JNK activation. Facilitates TNF-alpha-mediated recruitment of adapter proteins TRADD and RIPK1 to TNFRSF1A and regulates PAK4 protein stability via inhibition of its ubiquitin-mediated proteasomal degradation. Inhibits PPP1CA phosphatase activity. The sequence is that of E3 ubiquitin-protein ligase SH3RF2 (Sh3rf2) from Rattus norvegicus (Rat).